The following is a 557-amino-acid chain: DNA mismatch repair protein MutL (557 aa).

This sequence belongs to the DNA mismatch repair MutL/HexB family.

Its function is as follows. This protein is involved in the repair of mismatches in DNA. It is required for dam-dependent methyl-directed DNA mismatch repair. May act as a 'molecular matchmaker', a protein that promotes the formation of a stable complex between two or more DNA-binding proteins in an ATP-dependent manner without itself being part of a final effector complex. The chain is DNA mismatch repair protein MutL from Methanothrix thermoacetophila (strain DSM 6194 / JCM 14653 / NBRC 101360 / PT) (Methanosaeta thermophila).